The primary structure comprises 82 residues: Small ribosomal subunit protein bS18 (82 aa).

The segment at 1-25 is disordered; that stretch reads MKRNNMKRARMEQSRRPKKNPLKAE.

It belongs to the bacterial ribosomal protein bS18 family. Part of the 30S ribosomal subunit. Forms a tight heterodimer with protein bS6.

Its function is as follows. Binds as a heterodimer with protein bS6 to the central domain of the 16S rRNA, where it helps stabilize the platform of the 30S subunit. The protein is Small ribosomal subunit protein bS18 of Corynebacterium urealyticum (strain ATCC 43042 / DSM 7109).